We begin with the raw amino-acid sequence, 388 residues long: Succinate--CoA ligase [ADP-forming] subunit beta (388 aa).

The 237-residue stretch at K9–K245 folds into the ATP-grasp domain. Residues K46, G53–G55, E100, Y103, and E108 each bind ATP. N200 and D214 together coordinate Mg(2+). Residues N265 and G322 to V324 each bind substrate.

This sequence belongs to the succinate/malate CoA ligase beta subunit family. Heterotetramer of two alpha and two beta subunits. Mg(2+) serves as cofactor.

It carries out the reaction succinate + ATP + CoA = succinyl-CoA + ADP + phosphate. The catalysed reaction is GTP + succinate + CoA = succinyl-CoA + GDP + phosphate. Its pathway is carbohydrate metabolism; tricarboxylic acid cycle; succinate from succinyl-CoA (ligase route): step 1/1. Its function is as follows. Succinyl-CoA synthetase functions in the citric acid cycle (TCA), coupling the hydrolysis of succinyl-CoA to the synthesis of either ATP or GTP and thus represents the only step of substrate-level phosphorylation in the TCA. The beta subunit provides nucleotide specificity of the enzyme and binds the substrate succinate, while the binding sites for coenzyme A and phosphate are found in the alpha subunit. The protein is Succinate--CoA ligase [ADP-forming] subunit beta of Psychrobacter cryohalolentis (strain ATCC BAA-1226 / DSM 17306 / VKM B-2378 / K5).